A 432-amino-acid polypeptide reads, in one-letter code: Adenylosuccinate synthetase (432 aa).

GTP-binding positions include 13–19 and 41–43; these read GDEGKGK and GHT. Aspartate 14 (proton acceptor) is an active-site residue. Positions 14 and 41 each coordinate Mg(2+). IMP-binding positions include 14 to 17, 39 to 42, threonine 130, arginine 144, glutamine 225, threonine 240, and arginine 304; these read DEGK and NAGH. The active-site Proton donor is the histidine 42. 300 to 306 contacts substrate; that stretch reads ATTGRRR. Residues arginine 306, 332 to 334, and 415 to 417 each bind GTP; these read KLD and STG.

Belongs to the adenylosuccinate synthetase family. Homodimer. It depends on Mg(2+) as a cofactor.

Its subcellular location is the cytoplasm. It catalyses the reaction IMP + L-aspartate + GTP = N(6)-(1,2-dicarboxyethyl)-AMP + GDP + phosphate + 2 H(+). Its pathway is purine metabolism; AMP biosynthesis via de novo pathway; AMP from IMP: step 1/2. Its function is as follows. Plays an important role in the de novo pathway of purine nucleotide biosynthesis. Catalyzes the first committed step in the biosynthesis of AMP from IMP. In Klebsiella pneumoniae (strain 342), this protein is Adenylosuccinate synthetase.